The sequence spans 333 residues: Beta-ketoacyl-[acyl-carrier-protein] synthase III (333 aa).

Residues C117 and H257 contribute to the active site. The segment at Q258–R262 is ACP-binding. The active site involves N287.

The protein belongs to the thiolase-like superfamily. FabH family. In terms of assembly, homodimer.

Its subcellular location is the cytoplasm. The enzyme catalyses malonyl-[ACP] + acetyl-CoA + H(+) = 3-oxobutanoyl-[ACP] + CO2 + CoA. It participates in lipid metabolism; fatty acid biosynthesis. Its function is as follows. Catalyzes the condensation reaction of fatty acid synthesis by the addition to an acyl acceptor of two carbons from malonyl-ACP. Catalyzes the first condensation reaction which initiates fatty acid synthesis and may therefore play a role in governing the total rate of fatty acid production. Possesses both acetoacetyl-ACP synthase and acetyl transacylase activities. Its substrate specificity determines the biosynthesis of branched-chain and/or straight-chain of fatty acids. The sequence is that of Beta-ketoacyl-[acyl-carrier-protein] synthase III from Azobacteroides pseudotrichonymphae genomovar. CFP2.